The chain runs to 188 residues: Trafficking protein particle complex subunit 5 (188 aa).

Phosphoserine is present on Ser10.

Belongs to the TRAPP small subunits family. BET3 subfamily. Component of the multisubunit TRAPP (transport protein particle) complex, which includes at least TRAPPC2, TRAPPC2L, TRAPPC3, TRAPPC3L, TRAPPC4, TRAPPC5, TRAPPC8, TRAPPC9, TRAPPC10, TRAPPC11 and TRAPPC12.

It is found in the golgi apparatus. The protein localises to the cis-Golgi network. The protein resides in the endoplasmic reticulum. Functionally, may play a role in vesicular transport from endoplasmic reticulum to Golgi. This Bos taurus (Bovine) protein is Trafficking protein particle complex subunit 5 (TRAPPC5).